We begin with the raw amino-acid sequence, 161 residues long: Lipoprotein signal peptidase (161 aa).

3 helical membrane passes run 9–29, 64–84, and 96–113; these read WLWL…LVVE, WQKY…ANVL, and MAYA…IDRA. Residues Asp120 and Asp138 contribute to the active site. The helical transmembrane segment at 133–153 threads the bilayer; the sequence is VFNIADVAIVMGAGLLILETF.

It belongs to the peptidase A8 family.

Its subcellular location is the cell inner membrane. It catalyses the reaction Release of signal peptides from bacterial membrane prolipoproteins. Hydrolyzes -Xaa-Yaa-Zaa-|-(S,diacylglyceryl)Cys-, in which Xaa is hydrophobic (preferably Leu), and Yaa (Ala or Ser) and Zaa (Gly or Ala) have small, neutral side chains.. Its pathway is protein modification; lipoprotein biosynthesis (signal peptide cleavage). Functionally, this protein specifically catalyzes the removal of signal peptides from prolipoproteins. This Haemophilus ducreyi (strain 35000HP / ATCC 700724) protein is Lipoprotein signal peptidase.